The sequence spans 331 residues: Spondin-2 (331 aa).

The N-terminal stretch at 1-26 (MENPSPAAALGKALCALLLATLGAAG) is a signal peptide. A Spondin domain is found at 31 to 221 (GESICSARAL…EITSSSPSHP (191 aa)). An intrachain disulfide couples C35 to C171. E141 is a binding site for a divalent metal cation. Ca(2+)-binding residues include D160, D188, and D192. Residues 277–331 (DCEVSLWSSWGLCGGHCGRLGTKSRTRYVRVQPANNGSPCPELEEEAECVPDNCV) form the TSP type-1 domain. W283 carries a C-linked (Man) tryptophan glycan.

In terms of assembly, monomer. Interacts with integrin. As to expression, expressed in normal lung tissue but not in lung carcinoma cell lines.

It localises to the secreted. Its subcellular location is the extracellular space. The protein resides in the extracellular matrix. Functionally, cell adhesion protein that promotes adhesion and outgrowth of hippocampal embryonic neurons. Binds directly to bacteria and their components and functions as an opsonin for macrophage phagocytosis of bacteria. Essential in the initiation of the innate immune response and represents a unique pattern-recognition molecule in the ECM for microbial pathogens. Binds bacterial lipopolysaccharide (LPS). In Homo sapiens (Human), this protein is Spondin-2 (SPON2).